The primary structure comprises 561 residues: MKVWMAILISILCWQSSSWAVCPAWSPARAQEEISRLQQQIKQWDDDYWKEGKSEVEDGVYDQLSARLTQWQRCFGEETHRDAMMPPLNGAVIHPVAHTGVRKMADKIALSLWMRERSDLWVQPKVDGVAVTLVYRDGKLNKAISRGNGLKGEDWTQKVRLISAVPQTVSGPLANSTLQGEIFLKREGHIQQQMGGINARAKVADLMMRQDDSDTLNSLGVFVWAWPDGPQLMTDRLKELATAGFTLTQTYTRAVKNADEVARVRNAWWKTKLPFVTDGVVVRAAKEPESRHWLPGQAEWLVAWKYQPVAQVAEVKAIQFAVGKSGKISVVASLAPVMLDDKKVQRVNIGSVRRWQEWNIAPGDQILVSLAGQGIPRIDDVVWRGAERTKPTPPENRFNSLTCYFASDVCQEQFISRLVWLGSKQVLGLDGIGEAGWRSLHQTHRFEHIFSWLLLTPEQLQNTPGIAKSKSAQLWHQFNLARQQPFTRWVMAMGIPLTRAALNASDERSWSQLLLSTEQFWQQLPGTGSGRVRQVIEWKENAQIKKLGSWLAAQQITGFEP.

K125 serves as the catalytic N6-AMP-lysine intermediate.

Belongs to the NAD-dependent DNA ligase family. LigB subfamily.

The catalysed reaction is NAD(+) + (deoxyribonucleotide)n-3'-hydroxyl + 5'-phospho-(deoxyribonucleotide)m = (deoxyribonucleotide)n+m + AMP + beta-nicotinamide D-nucleotide.. Its function is as follows. Catalyzes the formation of phosphodiester linkages between 5'-phosphoryl and 3'-hydroxyl groups in double-stranded DNA using NAD as a coenzyme and as the energy source for the reaction. This Escherichia coli O127:H6 (strain E2348/69 / EPEC) protein is DNA ligase B.